The chain runs to 334 residues: Ribosomal RNA small subunit methyltransferase C (334 aa).

This sequence belongs to the methyltransferase superfamily. RsmC family. In terms of assembly, monomer.

Its subcellular location is the cytoplasm. It catalyses the reaction guanosine(1207) in 16S rRNA + S-adenosyl-L-methionine = N(2)-methylguanosine(1207) in 16S rRNA + S-adenosyl-L-homocysteine + H(+). Its function is as follows. Specifically methylates the guanine in position 1207 of 16S rRNA in the 30S particle. The protein is Ribosomal RNA small subunit methyltransferase C of Idiomarina loihiensis (strain ATCC BAA-735 / DSM 15497 / L2-TR).